The following is a 155-amino-acid chain: Protein-export protein SecB (155 aa).

This sequence belongs to the SecB family. Homotetramer, a dimer of dimers. One homotetramer interacts with 1 SecA dimer.

It is found in the cytoplasm. Its function is as follows. One of the proteins required for the normal export of preproteins out of the cell cytoplasm. It is a molecular chaperone that binds to a subset of precursor proteins, maintaining them in a translocation-competent state. It also specifically binds to its receptor SecA. The chain is Protein-export protein SecB from Klebsiella pneumoniae subsp. pneumoniae (strain ATCC 700721 / MGH 78578).